A 268-amino-acid polypeptide reads, in one-letter code: Putative esterase/lipase 2 (268 aa).

H28 is an active-site residue. Catalysis depends on H96, which acts as the Charge relay system.

The protein belongs to the lipase/esterase LIP3/BchO family.

This chain is Putative esterase/lipase 2, found in Mycoplasma pneumoniae (strain ATCC 29342 / M129 / Subtype 1) (Mycoplasmoides pneumoniae).